The primary structure comprises 213 residues: LexA repressor (213 aa).

Residues 27-47 (QTEIARAFGFKGIRAAQYHLE) constitute a DNA-binding region (H-T-H motif). Active-site for autocatalytic cleavage activity residues include Ser133 and Lys170.

Belongs to the peptidase S24 family. As to quaternary structure, homodimer.

It carries out the reaction Hydrolysis of Ala-|-Gly bond in repressor LexA.. Functionally, represses a number of genes involved in the response to DNA damage (SOS response), including recA and lexA. Has been shown to bind to the palindromic sequence 5'-CTG-N(8-12)-C-[TC]-G. In the presence of single-stranded DNA, RecA interacts with LexA causing an autocatalytic cleavage which disrupts the DNA-binding part of LexA, leading to derepression of the SOS regulon and eventually DNA repair. This Xanthomonas citri (Xanthomonas campestris pv. citri) protein is LexA repressor.